We begin with the raw amino-acid sequence, 169 residues long: uncharacterized protein (169 aa).

The transit peptide at 1-91 directs the protein to the mitochondrion; sequence MFSSTFRRLA…NKEQYTVRCL (91 aa). The segment at 54-76 is disordered; that stretch reads PQPKSPGSLPSSTRTAPNPNGEE. Residues 61 to 71 are compositionally biased toward polar residues; that stretch reads SLPSSTRTAPN.

Its subcellular location is the mitochondrion. This is an uncharacterized protein from Trypanosoma brucei brucei (strain 927/4 GUTat10.1).